The chain runs to 610 residues: Aspartate--tRNA(Asp/Asn) ligase (610 aa).

Glu-196 serves as a coordination point for L-aspartate. An aspartate region spans residues 220–223 (QIFK). Residue Arg-242 coordinates L-aspartate. ATP contacts are provided by residues 242 to 244 (RDE) and Gln-251. An L-aspartate-binding site is contributed by His-465. Glu-499 lines the ATP pocket. Residue Arg-506 participates in L-aspartate binding. 551–554 (GMDR) serves as a coordination point for ATP.

This sequence belongs to the class-II aminoacyl-tRNA synthetase family. Type 1 subfamily. Homodimer.

It is found in the cytoplasm. It catalyses the reaction tRNA(Asx) + L-aspartate + ATP = L-aspartyl-tRNA(Asx) + AMP + diphosphate. Its function is as follows. Aspartyl-tRNA synthetase with relaxed tRNA specificity since it is able to aspartylate not only its cognate tRNA(Asp) but also tRNA(Asn). Reaction proceeds in two steps: L-aspartate is first activated by ATP to form Asp-AMP and then transferred to the acceptor end of tRNA(Asp/Asn). The sequence is that of Aspartate--tRNA(Asp/Asn) ligase from Nitratidesulfovibrio vulgaris (strain ATCC 29579 / DSM 644 / CCUG 34227 / NCIMB 8303 / VKM B-1760 / Hildenborough) (Desulfovibrio vulgaris).